Reading from the N-terminus, the 110-residue chain is Large ribosomal subunit protein uL22 (110 aa).

The protein belongs to the universal ribosomal protein uL22 family. As to quaternary structure, part of the 50S ribosomal subunit.

Its function is as follows. This protein binds specifically to 23S rRNA; its binding is stimulated by other ribosomal proteins, e.g. L4, L17, and L20. It is important during the early stages of 50S assembly. It makes multiple contacts with different domains of the 23S rRNA in the assembled 50S subunit and ribosome. In terms of biological role, the globular domain of the protein is located near the polypeptide exit tunnel on the outside of the subunit, while an extended beta-hairpin is found that lines the wall of the exit tunnel in the center of the 70S ribosome. In Mannheimia succiniciproducens (strain KCTC 0769BP / MBEL55E), this protein is Large ribosomal subunit protein uL22.